The sequence spans 188 residues: Ribosome-recycling factor (188 aa).

It belongs to the RRF family.

The protein localises to the cytoplasm. Responsible for the release of ribosomes from messenger RNA at the termination of protein biosynthesis. May increase the efficiency of translation by recycling ribosomes from one round of translation to another. This Dinoroseobacter shibae (strain DSM 16493 / NCIMB 14021 / DFL 12) protein is Ribosome-recycling factor.